Reading from the N-terminus, the 65-residue chain is MLCLPVFIILLLLASPAAPNPLQTRIQSNLIRAGPEDANIKTDKRVIISGLLASILVPLIDAIKG.

An N-terminal signal peptide occupies residues 1–19; the sequence is MLCLPVFIILLLLASPAAP. The propeptide occupies 20–43; the sequence is NPLQTRIQSNLIRAGPEDANIKTD. Position 64 is a lysine amide (Lys-64).

The protein belongs to the conotoxin T superfamily. In terms of tissue distribution, expressed by the venom duct.

It localises to the secreted. The protein is Conotoxin VnMLCL-041 of Conus ventricosus (Mediterranean cone).